The primary structure comprises 66 residues: Beta-toxin Cb1 (66 aa).

Residues 1 to 66 (KEGYIVNHST…VWPLPKKTCN (66 aa)) enclose the LCN-type CS-alpha/beta domain. Cystine bridges form between cysteine 12/cysteine 65, cysteine 16/cysteine 41, cysteine 25/cysteine 46, and cysteine 29/cysteine 48.

It belongs to the long (4 C-C) scorpion toxin superfamily. Sodium channel inhibitor family. Beta subfamily. In terms of tissue distribution, expressed by the venom gland.

Its subcellular location is the secreted. With respect to regulation, inhibited by human antibodies scFvs 10FG2 and LR. Functionally, beta toxins bind voltage-independently at site-4 of sodium channels (Nav) and reduces peak current and shifts the voltage of activation toward more negative potentials thereby affecting sodium channel activation and promoting spontaneous and repetitive firing. Has an inhibitory effect on voltage-gated sodium channel hNav1.6/SCN8A, affecting both the activation and inactivation processes. This toxin is active against mammals and lethal to mice. The chain is Beta-toxin Cb1 from Centruroides baergi (Scorpion).